Consider the following 979-residue polypeptide: MKRNGESHLNGEAKKSRTEQNQEQQDYQDEYYSSSDEELLPSSQTSPVFDIAHSNSDKWQSTIRKVVNSVVSIQFSHVAAFDTETALVSEATGFVVDAERGLILTNRHVVGPGPFTGYVVFDNHESVDVKPIYRDPVHDFGFLQFDTKDVKYLKLTQLDLDPSLAKIGTEIRVVGNDNGEKLSILAGIISRIDRNAPDYGALTYNDFNTEYIQAAASATGGSSGSPVVNEDGKCVALQAGGSTEASTDFFLPVSRPKRALQCIQKGLPITRGDIQVEWQLKPFDECARLGFTAEAEAEARKMFPDKIGMLVAELVLPEGPADGLIKEGDTLISIQGEYISTFVRVDEILDENVGKELEFVFQRSGREIKQMIKIGNLHAITPDRFVHVAGASFNNLSYQVARCYCLPVRGLYVCDGSGSFEFSNQDTLGFIVETVDDKPVANLDEFVEVMKQLPDCSRVPVVYRHVSDMHAEYVQTIYIDRHWYTSFKLAVRNDTTGLWDFTTLQKEALPPAALVPQNAKYVDIPFSDPSRAECSKLVRSFVQVRTLCPSGVDSHPFKKDIGYGVVVDSTNGYVLVSRRYVPHYMCDIFVVFAESIDVAGEVVFLHPHLNYAIIKYDPKLVLADVQSPKFSETPLKRGDDLFFIGYNYNLRVVTDDVKVSSISSLNVTANSIAPRYRGTNLECILLDSKLTHECNTGVLVDNDGTLRAFWLSYLGESNELSFKMGLDVTDVLSILKSLQANHIPKSLRMLDAEFASLTVLQGRTRGVPQTWIKRFEDEAQDLIKFLSVDRVSAPTFEAKPSPLKVGDIVLSVNGKLVKNMRDFASMYDETSLTFNIIRQKQEMTLEVPTIDTTSMETSHVVSWSGALLQKPHYGVRQLMTKIPSEVYIVDKSSCGPAHQYGIVPISFITHVNDQETKDLDSFIQVVKLIPDKTYVKLRLVSFDNIPAAISLKTDYHYFPTTTLKRDAVSGKWNTEKINE.

Over residues 1 to 20 the composition is skewed to basic and acidic residues; that stretch reads MKRNGESHLNGEAKKSRTEQ. The segment at 1–43 is disordered; it reads MKRNGESHLNGEAKKSRTEQNQEQQDYQDEYYSSSDEELLPSS. Residues 21-34 are compositionally biased toward low complexity; the sequence is NQEQQDYQDEYYSS. Positions 65-260 are serine protease; the sequence is KVVNSVVSIQ…LPVSRPKRAL (196 aa). Residues H108, D139, and S222 each act as charge relay system in the active site. PDZ domains follow at residues 277 to 362 and 871 to 943; these read EWQL…FVFQ and PHYG…VSFD.

This sequence belongs to the peptidase S1C family.

The protein resides in the nucleus. Functionally, nuclear serine protease which mediates apoptosis. The sequence is that of Pro-apoptotic serine protease NMA111 (NMA111) from Lodderomyces elongisporus (strain ATCC 11503 / CBS 2605 / JCM 1781 / NBRC 1676 / NRRL YB-4239) (Yeast).